A 362-amino-acid chain; its full sequence is S-adenosylmethionine:tRNA ribosyltransferase-isomerase (362 aa).

The protein belongs to the QueA family. In terms of assembly, monomer.

The protein localises to the cytoplasm. The catalysed reaction is 7-aminomethyl-7-carbaguanosine(34) in tRNA + S-adenosyl-L-methionine = epoxyqueuosine(34) in tRNA + adenine + L-methionine + 2 H(+). The protein operates within tRNA modification; tRNA-queuosine biosynthesis. Functionally, transfers and isomerizes the ribose moiety from AdoMet to the 7-aminomethyl group of 7-deazaguanine (preQ1-tRNA) to give epoxyqueuosine (oQ-tRNA). In Deinococcus radiodurans (strain ATCC 13939 / DSM 20539 / JCM 16871 / CCUG 27074 / LMG 4051 / NBRC 15346 / NCIMB 9279 / VKM B-1422 / R1), this protein is S-adenosylmethionine:tRNA ribosyltransferase-isomerase.